Reading from the N-terminus, the 316-residue chain is Porphobilinogen deaminase (316 aa).

Cys-245 carries the post-translational modification S-(dipyrrolylmethanemethyl)cysteine.

It belongs to the HMBS family. Monomer. Dipyrromethane serves as cofactor.

It carries out the reaction 4 porphobilinogen + H2O = hydroxymethylbilane + 4 NH4(+). Its pathway is porphyrin-containing compound metabolism; protoporphyrin-IX biosynthesis; coproporphyrinogen-III from 5-aminolevulinate: step 2/4. The protein operates within porphyrin-containing compound metabolism; chlorophyll biosynthesis. In terms of biological role, tetrapolymerization of the monopyrrole PBG into the hydroxymethylbilane pre-uroporphyrinogen in several discrete steps. The chain is Porphobilinogen deaminase from Prochlorococcus marinus (strain AS9601).